Reading from the N-terminus, the 65-residue chain is Large ribosomal subunit protein bL35 (65 aa).

The protein belongs to the bacterial ribosomal protein bL35 family.

The protein is Large ribosomal subunit protein bL35 of Sodalis glossinidius (strain morsitans).